The sequence spans 55 residues: MAKAVTVKIKLVSTADTGYFYVTKKNSRTQTEKLSFKKYDPVARKHVEFKEAKIK.

The protein belongs to the bacterial ribosomal protein bL33 family.

This is Large ribosomal subunit protein bL33 from Methylobacterium nodulans (strain LMG 21967 / CNCM I-2342 / ORS 2060).